The chain runs to 391 residues: Aspartate carbamoyltransferase 3, chloroplastic (391 aa).

The transit peptide at 1-69 (MTASSSLFSC…SKCDKMIKTR (69 aa)) directs the protein to the chloroplast. Carbamoyl phosphate contacts are provided by Arg137 and Thr138. Positions 137 and 138 each coordinate UMP. An L-aspartate-binding site is contributed by Lys167. Carbamoyl phosphate is bound by residues Arg188, His216, and Gln219. Residues Arg188 and His216 each contribute to the UMP site. UMP-binding residues include Arg249 and Arg311. The L-aspartate site is built by Arg249 and Arg311. Carbamoyl phosphate is bound by residues Leu351 and Pro352.

Belongs to the aspartate/ornithine carbamoyltransferase superfamily. ATCase family. As to quaternary structure, homotrimer.

Its subcellular location is the plastid. It localises to the chloroplast. The enzyme catalyses carbamoyl phosphate + L-aspartate = N-carbamoyl-L-aspartate + phosphate + H(+). Its pathway is pyrimidine metabolism; UMP biosynthesis via de novo pathway; (S)-dihydroorotate from bicarbonate: step 2/3. Its activity is regulated as follows. Feedback inhibited by UMP. In terms of biological role, catalyzes the condensation of carbamoyl phosphate and aspartate to form carbamoyl aspartate and inorganic phosphate, the committed step in the de novo pyrimidine nucleotide biosynthesis pathway. The polypeptide is Aspartate carbamoyltransferase 3, chloroplastic (PYRB3) (Pisum sativum (Garden pea)).